We begin with the raw amino-acid sequence, 307 residues long: Aspartate carbamoyltransferase catalytic subunit (307 aa).

Carbamoyl phosphate-binding residues include Arg59 and Thr60. Lys87 provides a ligand contact to L-aspartate. Carbamoyl phosphate contacts are provided by Arg109, His137, and Gln140. The L-aspartate site is built by Arg170 and Arg224. 2 residues coordinate carbamoyl phosphate: Gly265 and Pro266.

Belongs to the aspartate/ornithine carbamoyltransferase superfamily. ATCase family. In terms of assembly, heterododecamer (2C3:3R2) of six catalytic PyrB chains organized as two trimers (C3), and six regulatory PyrI chains organized as three dimers (R2).

The catalysed reaction is carbamoyl phosphate + L-aspartate = N-carbamoyl-L-aspartate + phosphate + H(+). It participates in pyrimidine metabolism; UMP biosynthesis via de novo pathway; (S)-dihydroorotate from bicarbonate: step 2/3. Catalyzes the condensation of carbamoyl phosphate and aspartate to form carbamoyl aspartate and inorganic phosphate, the committed step in the de novo pyrimidine nucleotide biosynthesis pathway. The protein is Aspartate carbamoyltransferase catalytic subunit of Cytophaga hutchinsonii (strain ATCC 33406 / DSM 1761 / CIP 103989 / NBRC 15051 / NCIMB 9469 / D465).